Consider the following 418-residue polypeptide: Major capsid protein (418 aa).

As to quaternary structure, multimerizes.

It is found in the virion. In terms of biological role, the most highly expressed virion protein; probably the major capsid protein. This is Major capsid protein from Pseudomonas phage PaMx41.